A 55-amino-acid polypeptide reads, in one-letter code: MPREQIILECTEAKALGKPASRYYGTKNKKQQQGKIELRKYNPFLRRHTLHREIK.

The protein belongs to the bacterial ribosomal protein bL33 family.

The protein is Large ribosomal subunit protein bL33 of Methylacidiphilum infernorum (isolate V4) (Methylokorus infernorum (strain V4)).